Reading from the N-terminus, the 506-residue chain is 2,3-bisphosphoglycerate-independent phosphoglycerate mutase (506 aa).

Asp13 and Ser63 together coordinate Mn(2+). The Phosphoserine intermediate role is filled by Ser63. Substrate contacts are provided by residues His124, 153–154, Arg183, Arg189, 254–257, and Lys330; these read RD and RADR. 5 residues coordinate Mn(2+): Asp396, His400, Asp437, His438, and His456.

The protein belongs to the BPG-independent phosphoglycerate mutase family. As to quaternary structure, monomer. Mn(2+) serves as cofactor.

The catalysed reaction is (2R)-2-phosphoglycerate = (2R)-3-phosphoglycerate. Its pathway is carbohydrate degradation; glycolysis; pyruvate from D-glyceraldehyde 3-phosphate: step 3/5. Its function is as follows. Catalyzes the interconversion of 2-phosphoglycerate and 3-phosphoglycerate. This is 2,3-bisphosphoglycerate-independent phosphoglycerate mutase from Cereibacter sphaeroides (strain ATCC 17023 / DSM 158 / JCM 6121 / CCUG 31486 / LMG 2827 / NBRC 12203 / NCIMB 8253 / ATH 2.4.1.) (Rhodobacter sphaeroides).